We begin with the raw amino-acid sequence, 286 residues long: Probable tRNA(His) guanylyltransferase (286 aa).

Aspartate 29, glycine 30, and aspartate 76 together coordinate Mg(2+). GTP is bound by residues 29–34 and 75–76; these read DGKKFH and SD.

This sequence belongs to the tRNA(His) guanylyltransferase family. Mg(2+) is required as a cofactor.

It catalyses the reaction a 5'-end ribonucleotide-tRNA(His) + GTP + ATP + H2O = a 5'-end phospho-guanosine-ribonucleotide-tRNA(His) + AMP + 2 diphosphate + H(+). In terms of biological role, adds a GMP to the 5'-end of tRNA(His) after transcription and RNase P cleavage. This is Probable tRNA(His) guanylyltransferase from Drosophila melanogaster (Fruit fly).